Consider the following 1128-residue polypeptide: Translation initiation factor IF-2 (1128 aa).

The segment at 57–519 (NSDKQILSIN…KETTRQRQKR (463 aa)) is disordered. The segment covering 70 to 83 (NKKDNYKQNKEDKS) has biased composition (basic and acidic residues). Positions 100 to 110 (KKQLLNKPLNK) are enriched in low complexity. The segment covering 120–146 (QLKNPNKPNIYNSSQSQANLTNQNTKS) has biased composition (polar residues). Basic and acidic residues predominate over residues 147–158 (KPSEHFNKDKKT). Residues 182-196 (KNINNNLKSNESSKN) show a composition bias toward low complexity. Over residues 201–214 (GDKRELSLKPDQNR) the composition is skewed to basic and acidic residues. 2 stretches are compositionally biased toward polar residues: residues 243-267 (KQNN…NRPG) and 386-397 (AKTNNQKQNIES). Over residues 432–445 (RKDWDDSAKLEALR) the composition is skewed to basic and acidic residues. Residues 499-519 (HKSTKQFKKKKKETTRQRQKR) are compositionally biased toward basic residues. A tr-type G domain is found at 620 to 792 (KRPPVITVMG…ILLVSEVEDL (173 aa)). The segment at 629–636 (GHVDHGKT) is G1. 629–636 (GHVDHGKT) contacts GTP. Residues 654-658 (GITQH) are G2. Residues 679–682 (DTPG) are G3. GTP is bound by residues 679–683 (DTPGH) and 733–736 (NKID). The interval 733 to 736 (NKID) is G4. The tract at residues 769-771 (SAI) is G5.

This sequence belongs to the TRAFAC class translation factor GTPase superfamily. Classic translation factor GTPase family. IF-2 subfamily.

It localises to the cytoplasm. Its function is as follows. One of the essential components for the initiation of protein synthesis. Protects formylmethionyl-tRNA from spontaneous hydrolysis and promotes its binding to the 30S ribosomal subunits. Also involved in the hydrolysis of GTP during the formation of the 70S ribosomal complex. The polypeptide is Translation initiation factor IF-2 (Prochlorococcus marinus (strain MIT 9312)).